Consider the following 460-residue polypeptide: uncharacterized protein (460 aa).

The TRAM domain occupies 6 to 64 (PVKKNSTYNLYITGMGTKGEGIGKINNFTIFVTGAILGEEVEVNIIKVNKNYAVGKLLN). The [4Fe-4S] cluster site is built by cysteine 77, cysteine 83, cysteine 86, and cysteine 163. Residues glutamine 287, tyrosine 316, glutamate 337, and aspartate 385 each contribute to the S-adenosyl-L-methionine site. The Nucleophile role is filled by cysteine 412.

It belongs to the class I-like SAM-binding methyltransferase superfamily. RNA M5U methyltransferase family.

This is an uncharacterized protein from Clostridium tetani (strain Massachusetts / E88).